Reading from the N-terminus, the 92-residue chain is Small ribosomal subunit protein uS19 (92 aa).

Belongs to the universal ribosomal protein uS19 family.

In terms of biological role, protein S19 forms a complex with S13 that binds strongly to the 16S ribosomal RNA. The chain is Small ribosomal subunit protein uS19 from Crocosphaera subtropica (strain ATCC 51142 / BH68) (Cyanothece sp. (strain ATCC 51142)).